A 138-amino-acid chain; its full sequence is Putative pre-16S rRNA nuclease (138 aa).

This sequence belongs to the YqgF nuclease family.

The protein localises to the cytoplasm. In terms of biological role, could be a nuclease involved in processing of the 5'-end of pre-16S rRNA. The polypeptide is Putative pre-16S rRNA nuclease (Glaesserella parasuis serovar 5 (strain SH0165) (Haemophilus parasuis)).